A 217-amino-acid chain; its full sequence is UPF0502 protein AHA_2872 (217 aa).

It belongs to the UPF0502 family.

This Aeromonas hydrophila subsp. hydrophila (strain ATCC 7966 / DSM 30187 / BCRC 13018 / CCUG 14551 / JCM 1027 / KCTC 2358 / NCIMB 9240 / NCTC 8049) protein is UPF0502 protein AHA_2872.